The primary structure comprises 1485 residues: Actin cytoskeleton-regulatory complex protein pan1 (1485 aa).

The interval 1–161 is disordered; it reads MYSSSNSFMG…PPPPKSAGSK (161 aa). Residues 21–49 show a composition bias toward low complexity; the sequence is PFMQQPSYSQYPPGQPQSQQQTGFPSQPT. Polar residues predominate over residues 59–78; that stretch reads VGSQLQPQQTGFPGQLQPQF. The span at 81 to 107 shows a compositional bias: low complexity; sequence FPGAAPQQQQQQQQLGGFQQSVQQPQF. Composition is skewed to polar residues over residues 111–127 and 134–144; these read PPQNQLLSLQAPSTTGL and RTSSEVASSFN. An EH 1 domain is found at 174–262; it reads DQAKFEQLFK…EKIKNEVSSM (89 aa). Residues 206–241 form the EF-hand 1 domain; that stretch reads LPGSELSKIWILSDTTKSGQLFFPEFALAMYLCNLR. 2 disordered regions span residues 268–309 and 323–342; these read FGVP…QPTN and FLPQQTGFQPNQSSFLGPSA. A compositionally biased stretch (pro residues) spans 296-305; that stretch reads PPAPQQPQPQ. Positions 323 to 338 are enriched in polar residues; the sequence is FLPQQTGFQPNQSSFL. The 90-residue stretch at 465–554 folds into the EH 2 domain; that stretch reads EKKIYDDLFR…PELIPPSTRN (90 aa). The EF-hand 2 domain occupies 498-533; the sequence is LNRQDLERIWTLADPHNRGRLNMDEFAVAMHLIYRK. 3 disordered regions span residues 620–649, 799–871, and 895–1485; these read AGYRSSARRRVGNNARAASPATSHTSEEEL, AAEL…HERR, and RTAH…RVLG. Residues 645–765 adopt a coiled-coil conformation; the sequence is SEEELSVEQL…LFRLKDAKAH (121 aa). Composition is skewed to basic and acidic residues over residues 816 to 871 and 899 to 920; these read AAAR…HERR and VRKEEETRTLPTHDHRVRHEDP. A compositionally biased stretch (low complexity) spans 921–941; sequence SIASRPSPAPSAGSVGSAPGA. Composition is skewed to basic and acidic residues over residues 942 to 960, 980 to 1016, 1062 to 1137, and 1144 to 1156; these read THEDRVAAARERAQRRIAE, RQEREKREREERLRRAEEEDAKREQERQRRLAEEQRG, AARE…EQEA, and AELEMARERERQL. Positions 1054 to 1172 form a coiled coil; sequence EETAATEQAA…LEDESSSDEE (119 aa). The segment covering 1161 to 1173 has biased composition (acidic residues); that stretch reads EGLEDESSSDEEG. Positions 1177 to 1188 are enriched in polar residues; that stretch reads ITPQDSTPTQSQ. 2 stretches are compositionally biased toward low complexity: residues 1189-1201 and 1210-1226; these read VLPAPSPAAAAPE and PEITSSASSHAAPSSFS. 2 stretches are compositionally biased toward polar residues: residues 1238–1248 and 1255–1270; these read ITSQAAENQVS and QTTITSPKTDVQSTNP. Residues 1290–1299 show a composition bias toward basic and acidic residues; the sequence is LERKSRVRPE. Over residues 1353-1363 the composition is skewed to polar residues; sequence SKSSTPVQDNT. The span at 1364–1379 shows a compositional bias: low complexity; it reads VASPVVPEASASLSAP. Pro residues-rich tracts occupy residues 1380 to 1394 and 1406 to 1441; these read AAPPPPPPPPPPPAS and TAPPPPPPAPPIAPPAPPPGPPPPPGPPPPPAPPGA. Over residues 1442 to 1451 the composition is skewed to low complexity; sequence AAPAAPAGAA. The WH2 domain maps to 1452 to 1469; it reads DRSALLASIQMGKGLRKV. Positions 1472-1485 are enriched in polar residues; that stretch reads NDRSSSSSAGRVLG.

The protein belongs to the PAN1 family. Component of the PAN1 actin cytoskeleton-regulatory complex.

The protein localises to the cell membrane. Its subcellular location is the endosome membrane. It is found in the cytoplasm. The protein resides in the cytoskeleton. It localises to the actin patch. In terms of biological role, component of the PAN1 actin cytoskeleton-regulatory complex required for the internalization of endosomes during actin-coupled endocytosis. The complex links the site of endocytosis to the cell membrane-associated actin cytoskeleton. Mediates uptake of external molecules and vacuolar degradation of plasma membrane proteins. Plays a role in the proper organization of the cell membrane-associated actin cytoskeleton and promotes its destabilization. This is Actin cytoskeleton-regulatory complex protein pan1 (pan1) from Aspergillus clavatus (strain ATCC 1007 / CBS 513.65 / DSM 816 / NCTC 3887 / NRRL 1 / QM 1276 / 107).